The following is a 1379-amino-acid chain: DNA-directed RNA polymerase subunit beta'' (1379 aa).

Residues Cys220, Cys293, Cys300, and Cys303 each contribute to the Zn(2+) site.

This sequence belongs to the RNA polymerase beta' chain family. RpoC2 subfamily. In plastids the minimal PEP RNA polymerase catalytic core is composed of four subunits: alpha, beta, beta', and beta''. When a (nuclear-encoded) sigma factor is associated with the core the holoenzyme is formed, which can initiate transcription. Zn(2+) serves as cofactor.

It is found in the plastid. It localises to the chloroplast. The catalysed reaction is RNA(n) + a ribonucleoside 5'-triphosphate = RNA(n+1) + diphosphate. Its function is as follows. DNA-dependent RNA polymerase catalyzes the transcription of DNA into RNA using the four ribonucleoside triphosphates as substrates. In Olimarabidopsis pumila (Dwarf rocket), this protein is DNA-directed RNA polymerase subunit beta''.